Reading from the N-terminus, the 325-residue chain is NADH-quinone oxidoreductase subunit H (325 aa).

A run of 8 helical transmembrane segments spans residues Ile11 to Phe31, Val81 to Val101, Ile114 to Gly134, Leu154 to Phe174, Leu186 to Val206, Phe237 to Phe257, Leu265 to Ile285, and Val304 to Ala324.

It belongs to the complex I subunit 1 family. In terms of assembly, NDH-1 is composed of 13 different subunits. Subunits NuoA, H, J, K, L, M, N constitute the membrane sector of the complex.

The protein resides in the cell inner membrane. The enzyme catalyses a quinone + NADH + 5 H(+)(in) = a quinol + NAD(+) + 4 H(+)(out). NDH-1 shuttles electrons from NADH, via FMN and iron-sulfur (Fe-S) centers, to quinones in the respiratory chain. The immediate electron acceptor for the enzyme in this species is believed to be ubiquinone. Couples the redox reaction to proton translocation (for every two electrons transferred, four hydrogen ions are translocated across the cytoplasmic membrane), and thus conserves the redox energy in a proton gradient. This subunit may bind ubiquinone. This chain is NADH-quinone oxidoreductase subunit H, found in Klebsiella pneumoniae (strain 342).